The sequence spans 219 residues: MNDTVLKPNLIIRHYKNLHNYASLFQEMRSYTDQRDEHSPDQLWILQHHPVLTQGQAGKPEHILIPSDLPVVQSDRGGQVTWHGPGQMVIYFMFDLNRLKWNVRTLVSFAEQLMIDLIKKYNIDAYAKADAPGVYVAERKIGSLGFKIRRGRSYHGLALNIDCDLSGFQTINPCGYAGLEMVRICDLVENYPRFDQLAQDVTAYFKEKSDFNDVQVILQ.

The BPL/LPL catalytic domain occupies 37-219 (EHSPDQLWIL…DFNDVQVILQ (183 aa)). Residues 76–83 (RGGQVTWH), 143–145 (SLG), and 156–158 (GLA) each bind substrate. The active-site Acyl-thioester intermediate is the Cys-174.

This sequence belongs to the LipB family.

It localises to the cytoplasm. The enzyme catalyses octanoyl-[ACP] + L-lysyl-[protein] = N(6)-octanoyl-L-lysyl-[protein] + holo-[ACP] + H(+). It participates in protein modification; protein lipoylation via endogenous pathway; protein N(6)-(lipoyl)lysine from octanoyl-[acyl-carrier-protein]: step 1/2. Its function is as follows. Catalyzes the transfer of endogenously produced octanoic acid from octanoyl-acyl-carrier-protein onto the lipoyl domains of lipoate-dependent enzymes. Lipoyl-ACP can also act as a substrate although octanoyl-ACP is likely to be the physiological substrate. This is Octanoyltransferase from Acinetobacter baylyi (strain ATCC 33305 / BD413 / ADP1).